The chain runs to 387 residues: Phosphoglycerate kinase (387 aa).

Substrate is bound by residues 21–23 (DLN), arginine 36, 59–62 (HLGR), arginine 113, and arginine 146. ATP-binding positions include lysine 197, glutamate 314, and 340–343 (GGDT).

Belongs to the phosphoglycerate kinase family. In terms of assembly, monomer.

Its subcellular location is the cytoplasm. The enzyme catalyses (2R)-3-phosphoglycerate + ATP = (2R)-3-phospho-glyceroyl phosphate + ADP. It participates in carbohydrate degradation; glycolysis; pyruvate from D-glyceraldehyde 3-phosphate: step 2/5. In Aliivibrio fischeri (strain MJ11) (Vibrio fischeri), this protein is Phosphoglycerate kinase.